The following is a 139-amino-acid chain: Cytochrome c-551 (139 aa).

A signal peptide spans Met-1 to Ala-20. 4 residues coordinate heme c: Cys-34, Cys-37, His-38, and Met-116.

It belongs to the cytochrome c family. Binds 1 heme c group covalently per subunit.

The protein is Cytochrome c-551 of Roseobacter denitrificans (strain ATCC 33942 / OCh 114) (Erythrobacter sp. (strain OCh 114)).